We begin with the raw amino-acid sequence, 207 residues long: Small ribosomal subunit protein uS4c (207 aa).

In terms of domain architecture, S4 RNA-binding spans 92-156 (MRLDNILFRL…YQSIITKRIE (65 aa)).

This sequence belongs to the universal ribosomal protein uS4 family. Part of the 30S ribosomal subunit. Contacts protein S5. The interaction surface between S4 and S5 is involved in control of translational fidelity.

It localises to the plastid. The protein localises to the chloroplast. One of the primary rRNA binding proteins, it binds directly to 16S rRNA where it nucleates assembly of the body of the 30S subunit. Its function is as follows. With S5 and S12 plays an important role in translational accuracy. The chain is Small ribosomal subunit protein uS4c (rps4) from Equisetum arvense (Field horsetail).